The chain runs to 426 residues: uncharacterized protein (426 aa).

Belongs to the serpin family.

This is an uncharacterized protein from Methanosarcina acetivorans (strain ATCC 35395 / DSM 2834 / JCM 12185 / C2A).